Consider the following 154-residue polypeptide: SsrA-binding protein (154 aa).

The disordered stretch occupies residues 134 to 154; sequence DKREDIKKRDQERELSRRFKN.

The protein belongs to the SmpB family.

It is found in the cytoplasm. Required for rescue of stalled ribosomes mediated by trans-translation. Binds to transfer-messenger RNA (tmRNA), required for stable association of tmRNA with ribosomes. tmRNA and SmpB together mimic tRNA shape, replacing the anticodon stem-loop with SmpB. tmRNA is encoded by the ssrA gene; the 2 termini fold to resemble tRNA(Ala) and it encodes a 'tag peptide', a short internal open reading frame. During trans-translation Ala-aminoacylated tmRNA acts like a tRNA, entering the A-site of stalled ribosomes, displacing the stalled mRNA. The ribosome then switches to translate the ORF on the tmRNA; the nascent peptide is terminated with the 'tag peptide' encoded by the tmRNA and targeted for degradation. The ribosome is freed to recommence translation, which seems to be the essential function of trans-translation. The polypeptide is SsrA-binding protein (Leuconostoc mesenteroides subsp. mesenteroides (strain ATCC 8293 / DSM 20343 / BCRC 11652 / CCM 1803 / JCM 6124 / NCDO 523 / NBRC 100496 / NCIMB 8023 / NCTC 12954 / NRRL B-1118 / 37Y)).